The following is a 62-amino-acid chain: Alpha-conotoxin-like Qc1.2 (62 aa).

A signal peptide spans 1–21 (MGMRMMFTVFLLVALATTVAS). Positions 22–48 (FTLDRASNGRNAAADDKPSDWIALAIK) are excised as a propeptide. Q49 carries the pyrrolidone carboxylic acid modification. 2 cysteine pairs are disulfide-bonded: C50–C56 and C51–C61.

This sequence belongs to the conotoxin A superfamily. In terms of tissue distribution, expressed by the venom duct.

Its subcellular location is the secreted. In terms of biological role, alpha-conotoxins bind to the nicotinic acetylcholine receptors (nAChR) and inhibit them. This synthetic peptide (10 uM) selectively, but weakly inhibits both rat neuronal alpha-3-beta-2/CHRNA3-CHRNB2 (63%) and alpha-3-beta-4/CHRNA3-CHRNB4 (37%) subtypes of nAChR. This is Alpha-conotoxin-like Qc1.2 from Conus quercinus (Oak cone).